Reading from the N-terminus, the 118-residue chain is Ribonuclease P protein component (118 aa).

Belongs to the RnpA family. In terms of assembly, consists of a catalytic RNA component (M1 or rnpB) and a protein subunit.

The enzyme catalyses Endonucleolytic cleavage of RNA, removing 5'-extranucleotides from tRNA precursor.. In terms of biological role, RNaseP catalyzes the removal of the 5'-leader sequence from pre-tRNA to produce the mature 5'-terminus. It can also cleave other RNA substrates such as 4.5S RNA. The protein component plays an auxiliary but essential role in vivo by binding to the 5'-leader sequence and broadening the substrate specificity of the ribozyme. This chain is Ribonuclease P protein component, found in Rickettsia typhi (strain ATCC VR-144 / Wilmington).